A 298-amino-acid chain; its full sequence is Ribosomal protein L11 methyltransferase (298 aa).

4 residues coordinate S-adenosyl-L-methionine: T150, G171, D193, and N232.

Belongs to the methyltransferase superfamily. PrmA family.

It localises to the cytoplasm. The enzyme catalyses L-lysyl-[protein] + 3 S-adenosyl-L-methionine = N(6),N(6),N(6)-trimethyl-L-lysyl-[protein] + 3 S-adenosyl-L-homocysteine + 3 H(+). Functionally, methylates ribosomal protein L11. This is Ribosomal protein L11 methyltransferase from Chromobacterium violaceum (strain ATCC 12472 / DSM 30191 / JCM 1249 / CCUG 213 / NBRC 12614 / NCIMB 9131 / NCTC 9757 / MK).